Consider the following 427-residue polypeptide: Isoprenylcysteine alpha-carbonyl methylesterase ICME (427 aa).

The segment at 26–59 is disordered; the sequence is EVLPDEDSDRTTLLNGEPLRRRVSGKSPVDEGPR. 2 consecutive transmembrane segments (helical) span residues 102–122 and 157–177; these read LLALTCYAMLLMPGFLQVAYS and VVVFVTGGAWIIGYKAWGSLL. Residues 163 to 165 and 234 to 236 contribute to the substrate site; these read GGA and QSA. Active-site residues include Ser-235, Asp-336, and His-368.

This sequence belongs to the AB hydrolase superfamily. Isoprenylcysteine methylesterase family. Expressed in roots, rosette and cauline leaves, stems, flowers and siliques.

It localises to the endoplasmic reticulum membrane. The protein resides in the golgi apparatus membrane. The catalysed reaction is [protein]-C-terminal S-[(2E,6E)-farnesyl]-L-cysteine methyl ester + H2O = [protein]-C-terminal S-[(2E,6E)-farnesyl]-L-cysteine + methanol + H(+). Its function is as follows. Catalyzes the demethylation of isoprenylcysteine methylesters. In vitro, is specific for N-acetyl-S-farnesyl-L-cysteine methyl ester (AFCme) and has low activity toward N-acetyl-S-geranyl-L-cysteine methyl ester (AGCme). Acts as a positive regulator of ABA signaling. May be involved in the demethylation and inactivation of isoprenylated negative regulators of abscisic acid (ABA) signaling. Carboxyl methylation is a reversible and potentially regulated step in the post-translational modification of prenylated proteins. This Arabidopsis thaliana (Mouse-ear cress) protein is Isoprenylcysteine alpha-carbonyl methylesterase ICME.